The following is a 314-amino-acid chain: MKPCSVLVVGGTGYIGKRIVSASLYLGHDTYVLKRPGTGLDIEKLQLLLSFKKRGAHLVEASFSDHDSLVRAVRLVDVVICTMSGVHFRSHNILLQLKLVEAIKEAGNVKRFIPSEFGMDPARMGQAMEPGRETFDQKMVVRKAIEEANIPHTYISANCFAGYFVGNLSQLGTLTPPSDKVIIYGDGNVKVVYVDEDDVAKYTIKAIEDDRTVNKTVYLRPPENMMSQRELVAVWEKLSGNQLEKIELPPQDFLALMEGTTVAEQAGIGHFYHIFYEGCLTNFEINAENGEEEASRLYPEVEYTRVHDYLKIYL.

Residues 10-16, Arg35, and Lys44 contribute to the NADP(+) site; that span reads GGTGYIG. The active-site Proton acceptor is Lys138. Arg142 is an NADP(+) binding site. Residue His270 coordinates substrate.

Belongs to the NmrA-type oxidoreductase family. Isoflavone reductase subfamily. In terms of assembly, dimer.

The catalysed reaction is (+)-lariciresinol + NADP(+) = (+)-pinoresinol + NADPH + H(+). It catalyses the reaction (+)-secoisolariciresinol + NADP(+) = (-)-lariciresinol + NADPH + H(+). In terms of biological role, reductase involved in the lignan justicidin B biosynthesis. Catalyzes the enantioselective conversion of (+)-pinoresinol into (+)-lariciresinol and of (-)-lariciresinol into (+)-secoisolariciresinol. Low activity with the other enantiomers. Abstracts the 4R-hydride from the NADPH cofactor during catalysis. This chain is Bifunctional pinoresinol-lariciresinol reductase (PLR_Lp1), found in Linum perenne (Perennial flax).